A 455-amino-acid chain; its full sequence is Beta-cyclopiazonate dehydrogenase (455 aa).

A signal peptide spans 1 to 25 (MAVRIARFLGLSTVAYLALANGIDA).

Belongs to the beta-cyclopiazonate dehydrogenase family. The cofactor is FAD.

The catalysed reaction is beta-cyclopiazonate + A = alpha-cyclopiazonate + AH2. In terms of biological role, beta-cyclopiazonate dehydrogenase involved in the synthesis of the fungal neurotoxin alpha-cyclopiazonic acid (CPA). CpaO carries out the dehydrogenation of beta-CPA to yield an unstable enimine product, which is captured by intramolecular cyclization to create the pentacyclic fused scaffold of alpha-cyclopiazonate. This is Beta-cyclopiazonate dehydrogenase from Aspergillus oryzae (strain ATCC 42149 / RIB 40) (Yellow koji mold).